Here is a 187-residue protein sequence, read N- to C-terminus: UPF0398 protein SH1465 (187 aa).

Belongs to the UPF0398 family.

This is UPF0398 protein SH1465 from Staphylococcus haemolyticus (strain JCSC1435).